Consider the following 193-residue polypeptide: Shikimate kinase (193 aa).

Position 31 to 36 (31 to 36) interacts with ATP; it reads GVGKTT. Threonine 35 contacts Mg(2+). Substrate is bound by residues aspartate 53, arginine 77, and glycine 103. Residue arginine 141 participates in ATP binding. Residue arginine 160 participates in substrate binding. An ATP-binding site is contributed by glutamine 176.

The protein belongs to the shikimate kinase family. Monomer. Mg(2+) serves as cofactor.

The protein localises to the cytoplasm. It carries out the reaction shikimate + ATP = 3-phosphoshikimate + ADP + H(+). It participates in metabolic intermediate biosynthesis; chorismate biosynthesis; chorismate from D-erythrose 4-phosphate and phosphoenolpyruvate: step 5/7. In terms of biological role, catalyzes the specific phosphorylation of the 3-hydroxyl group of shikimic acid using ATP as a cosubstrate. The chain is Shikimate kinase from Novosphingobium aromaticivorans (strain ATCC 700278 / DSM 12444 / CCUG 56034 / CIP 105152 / NBRC 16084 / F199).